The chain runs to 457 residues: Glucuronide carrier protein homolog (457 aa).

Residues 1–11 are Cytoplasmic-facing; that stretch reads MNQQLSWRTIV. The chain crosses the membrane as a helical span at residues 12 to 34; it reads GYSLGDVANNFAFAMGALFLLSY. Over 35–37 the chain is Periplasmic; sequence YTD. Residues 38–60 traverse the membrane as a helical segment; it reads VAGVGAAAAGTMLLLVRVFDAFA. Residues 61–79 lie on the Cytoplasmic side of the membrane; sequence DVFAGRVVDSVNTRWGKFR. Residues 80–100 form a helical membrane-spanning segment; it reads PFLLFGTAPLMIFSVLVFWVL. The Periplasmic segment spans residues 101 to 108; sequence TDWSHGSK. The helical transmembrane segment at 109–129 threads the bilayer; sequence VVYAYLTYMGLGLCYSLVNIP. The Cytoplasmic segment spans residues 130–146; that stretch reads YGSLATAMTQQPQSRAR. Residues 147 to 167 traverse the membrane as a helical segment; it reads LGAARGIAASLTFVCLAFLIG. Topologically, residues 168–180 are periplasmic; the sequence is PSIKNSSPEEMVS. A helical membrane pass occupies residues 181–201; it reads VYHFWTIVLAIAGMVLYFICF. Over 202–228 the chain is Cytoplasmic; it reads KSTRENVVRIVAQPSLNISLQTLKRNR. The helical transmembrane segment at 229 to 249 threads the bilayer; sequence PLFMLCIGALCVLISTFAVSA. Residues 250–263 are Periplasmic-facing; sequence SSLFYVRYVLNDTG. A helical membrane pass occupies residues 264–284; that stretch reads LFTVLVLVQNLVGTVASAPLV. Over 285–296 the chain is Cytoplasmic; that stretch reads PGMVARIGKKNT. Residues 297–316 traverse the membrane as a helical segment; the sequence is FLIGALLGTCGYLLFFWVSV. Residues 317–320 are Periplasmic-facing; that stretch reads WSLP. A helical membrane pass occupies residues 321–343; it reads VALVALAIASIGQGVTMTVMWAL. Residues 344–372 lie on the Cytoplasmic side of the membrane; the sequence is EADTVEYGEYLTGVRIEGLTYSLFSFTRK. A helical transmembrane segment spans residues 373–393; that stretch reads CGQAIGGSIPAFILGLSGYIA. Over 394 to 408 the chain is Periplasmic; the sequence is NQVQTPEVIMGIRTS. Residues 409–429 form a helical membrane-spanning segment; that stretch reads IALVPCGFMLLAFVIIWFYPL. At 430–457 the chain is on the cytoplasmic side; that stretch reads TDKKFKEIVVEIDNRKKVQQQLISDITN.

This sequence belongs to the sodium:galactoside symporter (TC 2.A.2) family.

It is found in the cell inner membrane. The polypeptide is Glucuronide carrier protein homolog (uidB) (Escherichia coli (strain K12)).